The sequence spans 281 residues: Plasmanylethanolamine desaturase (281 aa).

Residues 1 to 28 are Cytoplasmic-facing; sequence MKTQEIEKKVRQQDAQVLAQGYSPAIRA. The chain crosses the membrane as a helical span at residues 29 to 45; the sequence is MEIAAIVSFVSLEVALV. Over 46–58 the chain is Periplasmic; sequence YRLWGTPYAGTWL. Residues 59–75 traverse the membrane as a helical segment; that stretch reads LLSAVLLGYLAADFVSG. Topologically, residues 76 to 123 are cytoplasmic; that stretch reads FVHWMGDTWGSTEMPVLGKALIRPFREHHVDEKAITRHDFVETNGNNC. A helical membrane pass occupies residues 124–138; that stretch reads LISLPVAIIALCLPM. Over 139–142 the chain is Periplasmic; it reads SGPG. The chain crosses the membrane as a helical span at residues 143-159; sequence WVFCASFLGAMIFWVMA. The Cytoplasmic segment spans residues 160–281; it reads TNQFHKWSHM…VQEKPASTRP (122 aa). A Histidine box-1 motif is present at residues 164–168; it reads HKWSH. A Histidine box-2 motif is present at residues 191–195; it reads HRIHH.

Belongs to the fatty acid desaturase CarF family. In terms of assembly, interacts with CarR.

It localises to the cell inner membrane. The enzyme catalyses a 1-(1,2-saturated alkyl)-2-acyl-sn-glycero-3-phosphoethanolamine + 2 Fe(II)-[cytochrome b5] + O2 + 2 H(+) = a 1-O-(1Z-alkenyl)-2-acyl-sn-glycero-3-phosphoethanolamine + 2 Fe(III)-[cytochrome b5] + 2 H2O. The catalysed reaction is 1-O-(13-methyltetradecyl)-2-(13-methyltetradecanoyl)-sn-glycero-3-phosphoethanolamine + 2 Fe(II)-[cytochrome b5] + O2 + 2 H(+) = 1-O-(1Z-13-methyltetradecenyl)-2-(13-methyltetradecanoyl)-sn-glycero-3-phosphoethanolamine + 2 Fe(III)-[cytochrome b5] + 2 H2O. Its function is as follows. Plasmanylethanolamine desaturase involved in plasmalogen biogenesis in the membrane, required for light-induced carotenogenesis. Plasmalogens are glycerophospholipids with a hydrocarbon chain linked by a vinyl ether bond at the glycerol sn-1 position, and are involved in antioxidative and signaling mechanisms, most precisely in sensing photooxidative stress through singlet oxygen. Participates in the light-dependent inactivation of the antisigma factor CarR. Mediates signaling by singlet oxygen, generated via photoexcited protoporphyrin IX. The protein is Plasmanylethanolamine desaturase of Myxococcus xanthus.